Here is a 123-residue protein sequence, read N- to C-terminus: Large ribosomal subunit protein bL12 (123 aa).

This sequence belongs to the bacterial ribosomal protein bL12 family. As to quaternary structure, homodimer. Part of the ribosomal stalk of the 50S ribosomal subunit. Forms a multimeric L10(L12)X complex, where L10 forms an elongated spine to which 2 to 4 L12 dimers bind in a sequential fashion. Binds GTP-bound translation factors.

In terms of biological role, forms part of the ribosomal stalk which helps the ribosome interact with GTP-bound translation factors. Is thus essential for accurate translation. The chain is Large ribosomal subunit protein bL12 from Clostridium kluyveri (strain NBRC 12016).